The sequence spans 342 residues: Phosphate acyltransferase (342 aa).

The protein belongs to the PlsX family. In terms of assembly, homodimer. Probably interacts with PlsY.

It is found in the cytoplasm. The enzyme catalyses a fatty acyl-[ACP] + phosphate = an acyl phosphate + holo-[ACP]. The protein operates within lipid metabolism; phospholipid metabolism. Functionally, catalyzes the reversible formation of acyl-phosphate (acyl-PO(4)) from acyl-[acyl-carrier-protein] (acyl-ACP). This enzyme utilizes acyl-ACP as fatty acyl donor, but not acyl-CoA. In Alkalilimnicola ehrlichii (strain ATCC BAA-1101 / DSM 17681 / MLHE-1), this protein is Phosphate acyltransferase.